A 274-amino-acid polypeptide reads, in one-letter code: Large ribosomal subunit protein uL2 (274 aa).

The interval asparagine 197–lysine 274 is disordered. Composition is skewed to basic residues over residues lysine 207–asparagine 220 and proline 244–lysine 274.

Belongs to the universal ribosomal protein uL2 family. Part of the 50S ribosomal subunit. Forms a bridge to the 30S subunit in the 70S ribosome.

Functionally, one of the primary rRNA binding proteins. Required for association of the 30S and 50S subunits to form the 70S ribosome, for tRNA binding and peptide bond formation. It has been suggested to have peptidyltransferase activity; this is somewhat controversial. Makes several contacts with the 16S rRNA in the 70S ribosome. The protein is Large ribosomal subunit protein uL2 of Porphyromonas gingivalis (strain ATCC BAA-308 / W83).